A 335-amino-acid chain; its full sequence is Pyridoxal 5'-phosphate synthase subunit PdxS (335 aa).

Position 30 (Asp30) interacts with D-ribose 5-phosphate. The active-site Schiff-base intermediate with D-ribose 5-phosphate is Lys87. Gly159 lines the D-ribose 5-phosphate pocket. Arg171 lines the D-glyceraldehyde 3-phosphate pocket. Residues Gly257 and 278-279 (GS) contribute to the D-ribose 5-phosphate site.

The protein belongs to the PdxS/SNZ family. In terms of assembly, in the presence of PdxT, forms a dodecamer of heterodimers.

It carries out the reaction aldehydo-D-ribose 5-phosphate + D-glyceraldehyde 3-phosphate + L-glutamine = pyridoxal 5'-phosphate + L-glutamate + phosphate + 3 H2O + H(+). The protein operates within cofactor biosynthesis; pyridoxal 5'-phosphate biosynthesis. Catalyzes the formation of pyridoxal 5'-phosphate from ribose 5-phosphate (RBP), glyceraldehyde 3-phosphate (G3P) and ammonia. The ammonia is provided by the PdxT subunit. Can also use ribulose 5-phosphate and dihydroxyacetone phosphate as substrates, resulting from enzyme-catalyzed isomerization of RBP and G3P, respectively. This is Pyridoxal 5'-phosphate synthase subunit PdxS from Thermococcus onnurineus (strain NA1).